A 1165-amino-acid chain; its full sequence is Disease resistance protein RPS4B (1165 aa).

The TIR domain maps to 12–174; it reads PQHQVFINFR…EIVKEVKKVL (163 aa). Glu86 is an active-site residue. Residues 211–474 form the NB-ARC domain; the sequence is KQRLKELEEK…FLDIACFRSQ (264 aa). One copy of the LRR 1 repeat lies at 592–613; it reads SHCPHECLTNNKINMPDGLELP. One copy of the LRR 2; degenerate repeat lies at 614–635; it reads LKEVRCLHWLKFPLEELPNDFD. LRR repeat units lie at residues 636-659, 684-703, 704-725, 726-748, 772-794, and 795-818; these read PINL…VKDT, NLQR…RDVN, LTSL…PLIP, ENLK…VGNL, LKTL…EINK, and SSLK…SVQY. The LRR 9; degenerate repeat unit spans residues 819–836; sequence LCLSRNDHLIYLPAGINQ. The stretch at 837–863 is one LRR 10 repeat; it reads VSQLTRLDLKYCTKLTYVPELPPTLQY.

The protein belongs to the disease resistance TIR-NB-LRR family. In terms of assembly, interacts with RRS1B. RPS4B-RRS1B heterodimer interacts with the bacterial effectors AvrRps4 and PopP2.

The protein resides in the nucleus. The enzyme catalyses NAD(+) + H2O = ADP-D-ribose + nicotinamide + H(+). In terms of biological role, disease resistance (R) protein that specifically recognizes the AvrRps4 type III effector avirulence protein from P.syringae. Heterodimerization with RRS1B is required to form a functional complex to recognize AvrRps4 and to mediate the hypersensitive response. The sequence is that of Disease resistance protein RPS4B from Arabidopsis thaliana (Mouse-ear cress).